Reading from the N-terminus, the 395-residue chain is Elongation factor Tu (395 aa).

The 196-residue stretch at Lys-10 to Val-205 folds into the tr-type G domain. Residues Gly-19 to Thr-26 are G1. Gly-19–Thr-26 contacts GTP. Residue Thr-26 participates in Mg(2+) binding. A G2 region spans residues Gly-60–Asn-64. A G3 region spans residues Asp-81–Gly-84. GTP contacts are provided by residues Asp-81–His-85 and Asn-136–Asp-139. The tract at residues Asn-136–Asp-139 is G4. The interval Ser-173–Phe-175 is G5.

This sequence belongs to the TRAFAC class translation factor GTPase superfamily. Classic translation factor GTPase family. EF-Tu/EF-1A subfamily. In terms of assembly, monomer.

Its subcellular location is the cytoplasm. It catalyses the reaction GTP + H2O = GDP + phosphate + H(+). GTP hydrolase that promotes the GTP-dependent binding of aminoacyl-tRNA to the A-site of ribosomes during protein biosynthesis. This Treponema denticola (strain ATCC 35405 / DSM 14222 / CIP 103919 / JCM 8153 / KCTC 15104) protein is Elongation factor Tu.